A 332-amino-acid chain; its full sequence is Ferredoxin--NADP reductase 2 (332 aa).

FAD-binding residues include D33, Q41, Y46, V86, I121, D282, and S325.

Belongs to the ferredoxin--NADP reductase type 2 family. In terms of assembly, homodimer. FAD serves as cofactor.

The catalysed reaction is 2 reduced [2Fe-2S]-[ferredoxin] + NADP(+) + H(+) = 2 oxidized [2Fe-2S]-[ferredoxin] + NADPH. In Sulfolobus acidocaldarius (strain ATCC 33909 / DSM 639 / JCM 8929 / NBRC 15157 / NCIMB 11770), this protein is Ferredoxin--NADP reductase 2.